The primary structure comprises 417 residues: Phosphoglycerate kinase 1 (417 aa).

The residue at position 2 (S2) is an N-acetylserine. 2 positions are modified to phosphoserine: S2 and S4. K6 is modified (N6-succinyllysine). K11 is modified (N6-acetyllysine). V23, D24, F25, N26, Q38, R39, S62, H63, G65, and R66 together coordinate (2R)-3-phosphoglycerate. The interval 38-43 is mitochondrial targeting region exposed following cis-trans isomerization by PIN1 and recognized by the TOM complex for mitochondrial translocation of the protein; that stretch reads QRIKAA. Residue K75 is modified to N6-acetyllysine. The residue at position 76 (Y76) is a Phosphotyrosine. N6-acetyllysine is present on residues K86 and K91. Residue K97 is modified to N6-(2-hydroxyisobutyryl)lysine; alternate. Residue K97 is modified to N6-acetyllysine; alternate. Residues L122 and R123 each contribute to the (2R)-3-phosphoglycerate site. An N6-acetyllysine; alternate modification is found at K131. K131 carries the post-translational modification N6-malonyllysine; alternate. An N6-acetyllysine modification is found at K146. H170 and R171 together coordinate (2R)-3-phosphoglycerate. K191 bears the N6-succinyllysine mark. Y196 carries the post-translational modification Phosphotyrosine. Position 199 is an N6-acetyllysine (K199). S203 carries the post-translational modification Phosphoserine. G214 is an ADP binding site. Residue G214 participates in CDP binding. A215 and K216 together coordinate AMP. A215 lines the ATP pocket. A215 contributes to the Mg(2+) binding site. K216 carries the post-translational modification N6-(2-hydroxyisobutyryl)lysine. Positions 218 and 219 each coordinate Mg(2+). Residue D219 participates in CDP binding. Residue K220 participates in AMP binding. K220 provides a ligand contact to ATP. At K220 the chain carries N6-(2-hydroxyisobutyryl)lysine. Residue G238 coordinates ADP. G238 contacts CDP. G239 is an AMP binding site. G239 is an ATP binding site. 2 positions are modified to N6-acetyllysine: K267 and K291. Position 313 (G313) interacts with AMP. G313 is an ATP binding site. Position 323 is an N6-(2-hydroxyisobutyryl)lysine (K323). CDP-binding residues include G338, V340, and F343. F343 is an ADP binding site. Residue E344 participates in AMP binding. ATP is bound by residues E344, D375, and T376. Mg(2+) is bound at residue D375.

Belongs to the phosphoglycerate kinase family. As to quaternary structure, monomer. Interacts with kinase MAPK1/ERK2; the interaction is direct, occurs under hypoxic conditions, and promotes its interaction with PIN1. Interacts with peptidyl-prolyl cis-trans isomerase PIN1; the interaction is direct, occurs under hypoxic conditions, and targets the protein to the mitochondrion by promoting interactions with the TOM complex. Interacts with mitochondrial circRNA mcPGK1 (via its 2nd stem-loop); the interaction is direct and targets the protein to the mitochondrion by promoting interactions with the TOM complex. Interacts with pyruvate dehydrogenase kinase PDK1; the interaction is direct, occurs under hypoxic conditions and leads to PDK1-mediated inhibition of pyruvate dehydrogenase complex activity. Mg(2+) serves as cofactor. In terms of processing, phosphorylated at Ser-203 by MAPK1/ERK2 under hypoxic conditions, which promotes its mitochondrial targeting.

The protein resides in the cytoplasm. It is found in the cytosol. It localises to the mitochondrion matrix. It carries out the reaction (2R)-3-phosphoglycerate + ATP = (2R)-3-phospho-glyceroyl phosphate + ADP. The enzyme catalyses L-seryl-[protein] + ATP = O-phospho-L-seryl-[protein] + ADP + H(+). The protein operates within carbohydrate degradation; glycolysis; pyruvate from D-glyceraldehyde 3-phosphate: step 2/5. In terms of biological role, catalyzes one of the two ATP producing reactions in the glycolytic pathway via the reversible conversion of 1,3-diphosphoglycerate to 3-phosphoglycerate. Both L- and D- forms of purine and pyrimidine nucleotides can be used as substrates, but the activity is much lower on pyrimidines. In addition to its role as a glycolytic enzyme, it seems that PGK-1 acts as a polymerase alpha cofactor protein (primer recognition protein). Acts as a protein kinase when localized to the mitochondrion where it phosphorylates pyruvate dehydrogenase kinase PDK1 to inhibit pyruvate dehydrogenase complex activity and suppress the formation of acetyl-coenzyme A from pyruvate, and consequently inhibit oxidative phosphorylation and promote glycolysis. May play a role in sperm motility. The polypeptide is Phosphoglycerate kinase 1 (PGK1) (Notamacropus eugenii (Tammar wallaby)).